We begin with the raw amino-acid sequence, 525 residues long: cAMP-dependent protein kinase regulatory subunit (525 aa).

A dimerization and phosphorylation region spans residues glutamine 28–leucine 213. 2 disordered regions span residues methionine 114–glycine 146 and serine 170–proline 196. Positions proline 124–glycine 146 are enriched in low complexity. Serine 170 is subject to Phosphoserine; by autocatalysis. A nucleoside 3',5'-cyclic phosphate is bound by residues leucine 214–aspartate 345 and leucine 348–aspartate 472. Residues glutamate 295, arginine 304, and glutamate 417 each contribute to the 3',5'-cyclic AMP site. The tract at residues serine 497 to alanine 525 is disordered.

It belongs to the cAMP-dependent kinase regulatory chain family. Tetramer, composed of 2 regulatory (R) and 2 catalytic (C) subunits. In the presence of cAMP it dissociates into 2 active monomeric C subunits and an R dimer.

This is cAMP-dependent protein kinase regulatory subunit (PKAR) from Mycosarcoma maydis (Corn smut fungus).